Reading from the N-terminus, the 830-residue chain is Lon protease 3 (830 aa).

A Lon N-terminal domain is found at 19-213; the sequence is VPLLPLRDII…RLIELMQAEI (195 aa). ATP is bound at residue 367 to 374; the sequence is GPPGVGKT. In terms of domain architecture, Lon proteolytic spans 604 to 784; the sequence is RDEVGLVNGL…DDVLREALIL (181 aa). Residues Ser690 and Lys733 contribute to the active site. A compositionally biased stretch (low complexity) spans 811-823; it reads PVKAPPAAAGEPT. A disordered region spans residues 811 to 830; sequence PVKAPPAAAGEPTPAAPPGA.

It belongs to the peptidase S16 family. Homohexamer. Organized in a ring with a central cavity.

The protein localises to the cytoplasm. The enzyme catalyses Hydrolysis of proteins in presence of ATP.. Functionally, ATP-dependent serine protease that mediates the selective degradation of mutant and abnormal proteins as well as certain short-lived regulatory proteins. Required for cellular homeostasis and for survival from DNA damage and developmental changes induced by stress. Degrades polypeptides processively to yield small peptide fragments that are 5 to 10 amino acids long. Binds to DNA in a double-stranded, site-specific manner. This Sorangium cellulosum (strain So ce56) (Polyangium cellulosum (strain So ce56)) protein is Lon protease 3.